A 492-amino-acid chain; its full sequence is MNNYFNKLTFIQKIKHLGQCRLMKKNEFSDGVRALLSKKIVIIGCGSQGLNQGLNMRDSGLNITYALRRDSIINQSQSYIRAMKYGFSVGTYDELIPEADFVINLIPDKYHESLIQKIEPLMKYKAVLGYSHGFHIVEIGVKIRQDITVIMVAPKCPGTEVRQEYQRGFGVPALIAVHEENNAYGTGMELAKSWACSIGSNKAGVLESSFVAEVKSDLMGEQTVLCGMLQVGSIFCFDKMVEDGLDSGYAGKLVQNGWEVITEALKQGGITLMMDRLSNVSKLRAFELSDQLKNILTPVFEKHMEDILDGSFSKNMMLDWINKDCKLLSYRQNNSQLLFEKAPVYCETILEQTYFDHGVLMVAIIKASVELAFDIMVKSGIKPESAYYESLHELPLIANTIARKRLYEMNMVISDTAEYGNYLFSDFVLPLLKKEFVPYLKRGDLDLSHVNNIVHIDNILLRDINEMIRTHPIEKVGVQLRSYMKDMVSLSF.

In terms of domain architecture, KARI N-terminal Rossmann spans 17–208 (LGQCRLMKKN…GSNKAGVLES (192 aa)). NADP(+) is bound by residues 45 to 48 (CGSQ), arginine 68, serine 76, and serine 78. Histidine 132 is a catalytic residue. Glycine 158 serves as a coordination point for NADP(+). 2 consecutive KARI C-terminal knotted domains span residues 209 to 344 (SFVA…KAPV) and 345 to 487 (YCET…MKDM). 4 residues coordinate Mg(2+): aspartate 217, glutamate 221, glutamate 389, and glutamate 393. Serine 414 contacts substrate.

This sequence belongs to the ketol-acid reductoisomerase family. Mg(2+) serves as cofactor.

The catalysed reaction is (2R)-2,3-dihydroxy-3-methylbutanoate + NADP(+) = (2S)-2-acetolactate + NADPH + H(+). It carries out the reaction (2R,3R)-2,3-dihydroxy-3-methylpentanoate + NADP(+) = (S)-2-ethyl-2-hydroxy-3-oxobutanoate + NADPH + H(+). The protein operates within amino-acid biosynthesis; L-isoleucine biosynthesis; L-isoleucine from 2-oxobutanoate: step 2/4. It functions in the pathway amino-acid biosynthesis; L-valine biosynthesis; L-valine from pyruvate: step 2/4. Involved in the biosynthesis of branched-chain amino acids (BCAA). Catalyzes an alkyl-migration followed by a ketol-acid reduction of (S)-2-acetolactate (S2AL) to yield (R)-2,3-dihydroxy-isovalerate. In the isomerase reaction, S2AL is rearranged via a Mg-dependent methyl migration to produce 3-hydroxy-3-methyl-2-ketobutyrate (HMKB). In the reductase reaction, this 2-ketoacid undergoes a metal-dependent reduction by NADPH to yield (R)-2,3-dihydroxy-isovalerate. This is Ketol-acid reductoisomerase (NADP(+)) from Blochmanniella floridana.